The chain runs to 144 residues: Large ribosomal subunit protein uL16 (144 aa).

The protein belongs to the universal ribosomal protein uL16 family. In terms of assembly, part of the 50S ribosomal subunit.

Its function is as follows. Binds 23S rRNA and is also seen to make contacts with the A and possibly P site tRNAs. The polypeptide is Large ribosomal subunit protein uL16 (Pediococcus pentosaceus (strain ATCC 25745 / CCUG 21536 / LMG 10740 / 183-1w)).